A 663-amino-acid polypeptide reads, in one-letter code: MIDKRDDKPFKLKSKYKPSGDQPQAIESLVDNIEGGEKAQILLGATGTGKTYTMSQVISKVNKPTLVIAHNKTLAGQLYGEFKEFFPDNAVEYFVSYYDYYQPEAYVPSSDTYIEKDSSVNDEIDKLRHSATSSLLERNDVIVVASVSCIYGLGSPKEYADSAVSLRPGQEISRDTLLNQLVDIQFERNDIDFQRGCFRVRGDVVEVFPASRDEHAFRVEFFGDEIDRICEIESLTGKTIGEVDHLVLFPATHFVTNDEHMEQSIAKIQAELAEQLQLFESEGKLLEAQRLRQRTEYDIEMLREMGYTSGVENYSRHMDGRSPGEPPYTLLDFFPEDFLIMIDESHMTMGQIKGMYNGDQARKQMLVDYGFRLPSALDNRPLRREEFESHVHQIVYVSATPGEYEMSQTNTIIEQIIRPTGLLDPEIDVRSSMGQMDDLLGEINQRVARDERTFITTLTKKMAEDLTDYLKEMGVKVKYMHSDIKTLERTEIIRDLRLGVFDVLIGINLLREGIDVPEVSLVAILDADKEGFLRNERGLIQTIGRAARNVDGHVIMYADKMTDSMQRAIDETARRREIQIAYNKAHGIVPQTIKKDIRGLISISKTSHNDISKEEMDYESMSRGERKEAINALQKQMQEAAELLDFELAAQMRDLILELKLMD.

Over residues 1-10 the composition is skewed to basic and acidic residues; that stretch reads MIDKRDDKPF. Residues 1–23 are disordered; sequence MIDKRDDKPFKLKSKYKPSGDQP. The Helicase ATP-binding domain occupies 31–418; the sequence is DNIEGGEKAQ…TNTIIEQIIR (388 aa). ATP is bound at residue 44 to 51; that stretch reads GATGTGKT. Residues 97–120 carry the Beta-hairpin motif; sequence YYDYYQPEAYVPSSDTYIEKDSSV. The Helicase C-terminal domain maps to 435 to 601; that stretch reads QMDDLLGEIN…TIKKDIRGLI (167 aa). One can recognise a UVR domain in the interval 627 to 662; sequence KEAINALQKQMQEAAELLDFELAAQMRDLILELKLM.

The protein belongs to the UvrB family. As to quaternary structure, forms a heterotetramer with UvrA during the search for lesions. Interacts with UvrC in an incision complex.

Its subcellular location is the cytoplasm. Its function is as follows. The UvrABC repair system catalyzes the recognition and processing of DNA lesions. A damage recognition complex composed of 2 UvrA and 2 UvrB subunits scans DNA for abnormalities. Upon binding of the UvrA(2)B(2) complex to a putative damaged site, the DNA wraps around one UvrB monomer. DNA wrap is dependent on ATP binding by UvrB and probably causes local melting of the DNA helix, facilitating insertion of UvrB beta-hairpin between the DNA strands. Then UvrB probes one DNA strand for the presence of a lesion. If a lesion is found the UvrA subunits dissociate and the UvrB-DNA preincision complex is formed. This complex is subsequently bound by UvrC and the second UvrB is released. If no lesion is found, the DNA wraps around the other UvrB subunit that will check the other stand for damage. This Streptococcus pyogenes serotype M1 protein is UvrABC system protein B.